A 1029-amino-acid polypeptide reads, in one-letter code: Protein translocase subunit SecA (1029 aa).

ATP contacts are provided by residues Gln-143, 161–165, and Asp-661; that span reads GEGKT. Positions 953–1029 are disordered; sequence EQEQKKSQVQ…GKKYKNCCGK (77 aa). Basic and acidic residues-rich tracts occupy residues 966 to 975 and 984 to 996; these read LVARHEKAET and PEGR…ENGK. Zn(2+) is bound by residues Cys-1015, Cys-1017, Cys-1026, and Cys-1027.

Belongs to the SecA family. Monomer and homodimer. Part of the essential Sec protein translocation apparatus which comprises SecA, SecYEG and auxiliary proteins SecDF. Other proteins may also be involved. It depends on Zn(2+) as a cofactor.

Its subcellular location is the cell inner membrane. The protein localises to the cytoplasm. It carries out the reaction ATP + H2O + cellular proteinSide 1 = ADP + phosphate + cellular proteinSide 2.. In terms of biological role, part of the Sec protein translocase complex. Interacts with the SecYEG preprotein conducting channel. Has a central role in coupling the hydrolysis of ATP to the transfer of proteins into and across the cell membrane, serving as an ATP-driven molecular motor driving the stepwise translocation of polypeptide chains across the membrane. This chain is Protein translocase subunit SecA, found in Chlorobium phaeobacteroides (strain BS1).